A 175-amino-acid polypeptide reads, in one-letter code: ATP synthase subunit b, chloroplastic (175 aa).

The chain crosses the membrane as a helical span at residues 22–42 (VFETNIINLAAVVGIVVSFVG).

Belongs to the ATPase B chain family. F-type ATPases have 2 components, F(1) - the catalytic core - and F(0) - the membrane proton channel. F(1) has five subunits: alpha(3), beta(3), gamma(1), delta(1), epsilon(1). F(0) has four main subunits: a(1), b(1), b'(1) and c(10-14). The alpha and beta chains form an alternating ring which encloses part of the gamma chain. F(1) is attached to F(0) by a central stalk formed by the gamma and epsilon chains, while a peripheral stalk is formed by the delta, b and b' chains.

It localises to the plastid. The protein resides in the chloroplast thylakoid membrane. Its function is as follows. F(1)F(0) ATP synthase produces ATP from ADP in the presence of a proton or sodium gradient. F-type ATPases consist of two structural domains, F(1) containing the extramembraneous catalytic core and F(0) containing the membrane proton channel, linked together by a central stalk and a peripheral stalk. During catalysis, ATP synthesis in the catalytic domain of F(1) is coupled via a rotary mechanism of the central stalk subunits to proton translocation. Component of the F(0) channel, it forms part of the peripheral stalk, linking F(1) to F(0). The sequence is that of ATP synthase subunit b, chloroplastic from Chlamydomonas reinhardtii (Chlamydomonas smithii).